Here is a 114-residue protein sequence, read N- to C-terminus: Ribosome-binding factor A (114 aa).

The protein belongs to the RbfA family. In terms of assembly, monomer. Binds 30S ribosomal subunits, but not 50S ribosomal subunits or 70S ribosomes.

It localises to the cytoplasm. In terms of biological role, one of several proteins that assist in the late maturation steps of the functional core of the 30S ribosomal subunit. Associates with free 30S ribosomal subunits (but not with 30S subunits that are part of 70S ribosomes or polysomes). Required for efficient processing of 16S rRNA. May interact with the 5'-terminal helix region of 16S rRNA. In Listeria monocytogenes serotype 4b (strain F2365), this protein is Ribosome-binding factor A.